Reading from the N-terminus, the 202-residue chain is Nucleoside triphosphate pyrophosphatase (202 aa).

The active-site Proton acceptor is aspartate 79.

The protein belongs to the Maf family. Requires a divalent metal cation as cofactor.

The protein localises to the cytoplasm. It catalyses the reaction a ribonucleoside 5'-triphosphate + H2O = a ribonucleoside 5'-phosphate + diphosphate + H(+). It carries out the reaction a 2'-deoxyribonucleoside 5'-triphosphate + H2O = a 2'-deoxyribonucleoside 5'-phosphate + diphosphate + H(+). In terms of biological role, nucleoside triphosphate pyrophosphatase. May have a dual role in cell division arrest and in preventing the incorporation of modified nucleotides into cellular nucleic acids. The chain is Nucleoside triphosphate pyrophosphatase from Nitrobacter hamburgensis (strain DSM 10229 / NCIMB 13809 / X14).